Here is a 443-residue protein sequence, read N- to C-terminus: C4-dicarboxylate transport protein (443 aa).

The next 7 membrane-spanning stretches (helical) occupy residues 7-26 (SLYV…GALF), 46-63 (MVIA…VAHM), 76-98 (ALIY…MNVL), 140-162 (LVSA…FGFA), 183-205 (VVFV…AMAF), 218-240 (LGYL…LGLI), and 350-372 (FITL…ALIL). Positions 415-443 (GEDLPTTEPDVASEERGEGREIDSSRPVT) are disordered. A compositionally biased stretch (basic and acidic residues) spans 427–443 (SEERGEGREIDSSRPVT).

It belongs to the dicarboxylate/amino acid:cation symporter (DAACS) (TC 2.A.23) family.

It is found in the cell membrane. Functionally, responsible for the transport of dicarboxylates such as succinate, fumarate, and malate across the membrane. In Deinococcus radiodurans (strain ATCC 13939 / DSM 20539 / JCM 16871 / CCUG 27074 / LMG 4051 / NBRC 15346 / NCIMB 9279 / VKM B-1422 / R1), this protein is C4-dicarboxylate transport protein (dctA).